A 410-amino-acid chain; its full sequence is MKDTVSQPAGGRGATAPRPADAASPSCGSSPSADSVSVVLAGGGTAGHVEPAMAVADALVALDPRVRITALGTLRGLETRLVPQRGYHLELITAVPMPRKPGGDLARLPSRVWRAVREARDVLDDVDADVVVGFGGYVALPAYLAARGLPLPPRRRRRIPVVIHEANARAGLANRVGAHTADRVLSAVPDSGLRRAEVVGVPVRASIAALDRAVLRAEARAHFGFPDDARVLLVFGGSQGAVSLNRAVSGAAADLAAAGVCVLHAHGPQNVLELRRRAQGDPPYVAVPYLDRMELAYAAADLVICRAGAMTVAEVSAVGLPAIYVPLPIGNGEQRLNALPVVNAGGGMVVADAALTPELVARQVAGLLTDPARLAAMTAAAARVGHRDAAGQVARAALAVATGAGARTTT.

The interval 1 to 35 (MKDTVSQPAGGRGATAPRPADAASPSCGSSPSADS) is disordered. Low complexity predominate over residues 14-35 (ATAPRPADAASPSCGSSPSADS). Residues 45–47 (TAG), Asn-167, Arg-204, Ser-238, and Gln-334 each bind UDP-N-acetyl-alpha-D-glucosamine.

Belongs to the glycosyltransferase 28 family. MurG subfamily.

It is found in the cell membrane. It carries out the reaction di-trans,octa-cis-undecaprenyl diphospho-N-acetyl-alpha-D-muramoyl-L-alanyl-D-glutamyl-meso-2,6-diaminopimeloyl-D-alanyl-D-alanine + UDP-N-acetyl-alpha-D-glucosamine = di-trans,octa-cis-undecaprenyl diphospho-[N-acetyl-alpha-D-glucosaminyl-(1-&gt;4)]-N-acetyl-alpha-D-muramoyl-L-alanyl-D-glutamyl-meso-2,6-diaminopimeloyl-D-alanyl-D-alanine + UDP + H(+). The protein operates within cell wall biogenesis; peptidoglycan biosynthesis. In terms of biological role, cell wall formation. Catalyzes the transfer of a GlcNAc subunit on undecaprenyl-pyrophosphoryl-MurNAc-pentapeptide (lipid intermediate I) to form undecaprenyl-pyrophosphoryl-MurNAc-(pentapeptide)GlcNAc (lipid intermediate II). The chain is UDP-N-acetylglucosamine--N-acetylmuramyl-(pentapeptide) pyrophosphoryl-undecaprenol N-acetylglucosamine transferase from Mycobacterium tuberculosis (strain ATCC 25177 / H37Ra).